We begin with the raw amino-acid sequence, 92 residues long: Large ribosomal subunit protein eL31 (92 aa).

It belongs to the eukaryotic ribosomal protein eL31 family.

In Desulfurococcus amylolyticus (strain DSM 18924 / JCM 16383 / VKM B-2413 / 1221n) (Desulfurococcus kamchatkensis), this protein is Large ribosomal subunit protein eL31.